The following is an 803-amino-acid chain: Translation initiation factor IF-2 (803 aa).

2 disordered regions span residues proline 95–glutamate 125 and glutamate 138–glutamate 178. The segment covering valine 111–asparagine 121 has biased composition (polar residues). The span at glutamate 138–lysine 155 shows a compositional bias: basic and acidic residues. A compositionally biased stretch (basic residues) spans lysine 156–lysine 167. Over residues proline 168–glutamate 178 the composition is skewed to basic and acidic residues. Positions proline 302–lysine 471 constitute a tr-type G domain. The tract at residues glycine 311–threonine 318 is G1. Glycine 311–threonine 318 provides a ligand contact to GTP. Residues glycine 336–histidine 340 are G2. A G3 region spans residues aspartate 357–glycine 360. GTP contacts are provided by residues aspartate 357–histidine 361 and asparagine 411–aspartate 414. A G4 region spans residues asparagine 411–aspartate 414. The segment at serine 447–lysine 449 is G5.

It belongs to the TRAFAC class translation factor GTPase superfamily. Classic translation factor GTPase family. IF-2 subfamily.

It localises to the cytoplasm. Its function is as follows. One of the essential components for the initiation of protein synthesis. Protects formylmethionyl-tRNA from spontaneous hydrolysis and promotes its binding to the 30S ribosomal subunits. Also involved in the hydrolysis of GTP during the formation of the 70S ribosomal complex. The protein is Translation initiation factor IF-2 of Coxiella burnetii (strain Dugway 5J108-111).